We begin with the raw amino-acid sequence, 268 residues long: 4-hydroxy-tetrahydrodipicolinate reductase (268 aa).

NAD(+) is bound by residues 9 to 14 (GAAGRM), 99 to 101 (GTT), and 123 to 126 (ASNF). Catalysis depends on H156, which acts as the Proton donor/acceptor. Residue H157 participates in (S)-2,3,4,5-tetrahydrodipicolinate binding. K160 (proton donor) is an active-site residue. A (S)-2,3,4,5-tetrahydrodipicolinate-binding site is contributed by 166 to 167 (GT).

The protein belongs to the DapB family.

It is found in the cytoplasm. It catalyses the reaction (S)-2,3,4,5-tetrahydrodipicolinate + NAD(+) + H2O = (2S,4S)-4-hydroxy-2,3,4,5-tetrahydrodipicolinate + NADH + H(+). It carries out the reaction (S)-2,3,4,5-tetrahydrodipicolinate + NADP(+) + H2O = (2S,4S)-4-hydroxy-2,3,4,5-tetrahydrodipicolinate + NADPH + H(+). It functions in the pathway amino-acid biosynthesis; L-lysine biosynthesis via DAP pathway; (S)-tetrahydrodipicolinate from L-aspartate: step 4/4. Functionally, catalyzes the conversion of 4-hydroxy-tetrahydrodipicolinate (HTPA) to tetrahydrodipicolinate. The chain is 4-hydroxy-tetrahydrodipicolinate reductase from Saccharophagus degradans (strain 2-40 / ATCC 43961 / DSM 17024).